The following is a 142-amino-acid chain: Immunoglobulin iota chain (142 aa).

A signal peptide spans 1-19; the sequence is MAWTSVLLMLLAYLTGCGP. The framework-1 stretch occupies residues 20–41; that stretch reads QPMVHQPPLASSSLGATIRLSC. The cysteines at positions 41 and 115 are disulfide-linked. Positions 42 to 56 are complementarity-determining-1; the sequence is TLSNDHNIGIYSIYW. Positions 57 to 70 are framework-2; it reads YQQRPGHPPRFLLR. Positions 71 to 81 are complementarity-determining-2; that stretch reads YFSHSDKHQGP. Residues 82 to 115 are framework-3; sequence DIPPRFSGSKDTTRNLGYLSISELQPEDEAVYYC.

Belongs to the immunoglobulin superfamily. As to quaternary structure, interacts with IGLL1. Interacts with SYNV1/HRD1 (via N-terminus); this interaction leads to increased VPREB1A ubiquitination and degradation in pre-B cells, possibly through a lysosomal, not proteasomal, pathway. As to expression, only expressed by pre-B-cells.

The protein localises to the endoplasmic reticulum. Functionally, associates with the Ig-mu chain to form a molecular complex that is expressed on the surface of pre-B-cells. This complex presumably regulates Ig gene rearrangements in the early steps of B-cell differentiation. The chain is Immunoglobulin iota chain from Mus musculus (Mouse).